Here is a 223-residue protein sequence, read N- to C-terminus: Mating-type protein ALPHA2 (223 aa).

Positions 151–213 (EFKKGKRFLK…NRRRKDKITE (63 aa)) form a DNA-binding region, homeobox; TALE-type.

Belongs to the TALE/M-ATYP homeobox family. In terms of assembly, forms a heterodimer with A1.

It localises to the nucleus. Functionally, mating type proteins are sequence specific DNA-binding proteins that act as master switches in yeast differentiation by controlling gene expression in a cell type-specific fashion. Transcriptional corepressor that acts in conjunction with A1 to repress transcription of haploid-specific genes. The chain is Mating-type protein ALPHA2 (HMLALPHA2) from Kluyveromyces lactis (strain ATCC 8585 / CBS 2359 / DSM 70799 / NBRC 1267 / NRRL Y-1140 / WM37) (Yeast).